Consider the following 93-residue polypeptide: Protein VNG_0358C (93 aa).

In Halobacterium salinarum (strain ATCC 700922 / JCM 11081 / NRC-1) (Halobacterium halobium), this protein is Protein VNG_0358C.